A 518-amino-acid chain; its full sequence is Probable G-protein coupled receptor Mth-like 2 (518 aa).

The first 26 residues, 1–26 (MIASSKMLLSASILIYFLLNLQSSSA), serve as a signal peptide directing secretion. Topologically, residues 27 to 220 (EIADCSFYDT…CLILPSRTGQ (194 aa)) are extracellular. 5 cysteine pairs are disulfide-bonded: C31–C85, C87–C92, C96–C190, C97–C108, and C152–C211. N47 carries N-linked (GlcNAc...) asparagine glycosylation. 3 N-linked (GlcNAc...) asparagine glycosylation sites follow: N111, N125, and N201. Residues 221 to 241 (TVVMITSLICLVLTIAVYLCV) traverse the membrane as a helical segment. At 242–250 (KKLMNLEGK) the chain is on the cytoplasmic side. A helical membrane pass occupies residues 251-271 (CFICYMMCLFFGYLFLLLDLW). Over 272 to 279 (ELSLDFCK) the chain is Extracellular. The helical transmembrane segment at 280-300 (AAGFLGYFFVMAAFFWLSIIS) threads the bilayer. Residues 301–321 (RHYWKCLTNPCASMNIRSERA) are Cytoplasmic-facing. The chain crosses the membrane as a helical span at residues 322-342 (FLLYSCFAWAMPLALTGVTYL). The Extracellular segment spans residues 343–371 (ADNVVNNEEWQPRVGDEGHCWIYTKSWSA). A helical membrane pass occupies residues 372–392 (MVYFYGPMVLLILFNITMFVL). Residues 393 to 426 (TAKHIIDSKRTLRKIARNEGRIQKLNSDKQNYTQ) lie on the Cytoplasmic side of the membrane. A helical membrane pass occupies residues 427–447 (FLLLFTVMGMSWSFEIFSYLV). At 448–455 (QREKLWVN) the chain is on the extracellular side. The chain crosses the membrane as a helical span at residues 456–476 (IFLVADYFNWSQGVIIFVLFI). Residues 477 to 518 (LRRKTLVLFKKQIFPKQRAFSRSATQSTIESISQTKRHFNMT) lie on the Cytoplasmic side of the membrane.

The protein belongs to the G-protein coupled receptor 2 family. Mth subfamily.

Its subcellular location is the cell membrane. In Drosophila melanogaster (Fruit fly), this protein is Probable G-protein coupled receptor Mth-like 2 (mthl2).